The following is a 431-amino-acid chain: Divergent protein kinase domain 1B (431 aa).

At 1–30 the chain is on the cytoplasmic side; sequence MRKLRRLVHMVLFCPISKGLQSRLPGIKVK. The short motif at 5 to 6 is the May mediate ER retention element; the sequence is RR. The chain crosses the membrane as a helical span at residues 31-51; it reads YLFLAWLSVFVGSWVVYMHYS. Residues 52–431 lie on the Lumenal side of the membrane; the sequence is SYSELCRGHV…WKKISNTKYS (380 aa). Disulfide bonds link Cys-57-Cys-94 and Cys-62-Cys-117.

This sequence belongs to the DIPK family. Among the many cysteines in the lumenal domain, most are probably involved in disulfide bonds.

It is found in the endoplasmic reticulum membrane. The polypeptide is Divergent protein kinase domain 1B (dipk1b) (Xenopus tropicalis (Western clawed frog)).